The sequence spans 1386 residues: Rab3 GTPase-activating protein non-catalytic subunit (1386 aa).

Residues 31 to 69 form a disordered region; that stretch reads GALRRDPSKTSNWEDDSWGAWEETEPQEPEEEGNTSKTQ. Phosphoserine is present on S38. The segment covering 43–63 has biased composition (acidic residues); the sequence is WEDDSWGAWEETEPQEPEEEG. A Phosphoserine modification is found at S448. Residue T899 is modified to Phosphothreonine. S914 carries the post-translational modification Phosphoserine. Positions 959–973 are enriched in basic and acidic residues; sequence REKDVENPDEPREGI. The interval 959-982 is disordered; sequence REKDVENPDEPREGIARSPPEVSE. S976 is modified (phosphoserine).

This sequence belongs to the Rab3-GAP regulatory subunit family. As to quaternary structure, the Rab3 GTPase-activating complex is a heterodimer composed of Rab3gap1 and Rab3gap2. The Rab3 GTPase-activating complex interacts with DMXL2. Interacts with LMAN1.

It is found in the cytoplasm. It localises to the endoplasmic reticulum. Regulatory subunit of the Rab3 GTPase-activating (Rab3GAP) complex composed of RAB3GAP1 and RAB3GAP2, which has GTPase-activating protein (GAP) activity towards various Rab3 subfamily members (RAB3A, RAB3B, RAB3C and RAB3D), RAB5A and RAB43, and guanine nucleotide exchange factor (GEF) activity towards RAB18. As part of the Rab3GAP complex, acts as a GAP for Rab3 proteins by converting active RAB3-GTP to the inactive form RAB3-GDP. Rab3 proteins are involved in regulated exocytosis of neurotransmitters and hormones. The Rab3GAP complex acts as a GEF for RAB18 by promoting the conversion of inactive RAB18-GDP to the active form RAB18-GTP. Recruits and stabilizes RAB18 at the cis-Golgi membrane in fibroblasts where RAB18 is most likely activated. Also involved in RAB18 recruitment at the endoplasmic reticulum (ER) membrane where it maintains proper ER structure. Required for normal eye and brain development. May participate in neurodevelopmental processes such as proliferation, migration and differentiation before synapse formation, and non-synaptic vesicular release of neurotransmitters. The sequence is that of Rab3 GTPase-activating protein non-catalytic subunit from Rattus norvegicus (Rat).